The sequence spans 55 residues: Large ribosomal subunit protein bL33 (55 aa).

The segment covering 1 to 10 (MAKGGREKIK) has biased composition (basic and acidic residues). The tract at residues 1-27 (MAKGGREKIKLQSTAGTGHFYTTDKNK) is disordered.

It belongs to the bacterial ribosomal protein bL33 family.

The chain is Large ribosomal subunit protein bL33 from Polaromonas naphthalenivorans (strain CJ2).